The chain runs to 422 residues: MAM and fibronectin type III domain-containing protein 1 (422 aa).

Positions 1-75 constitute an MAM domain; it reads KFYYHMYGAT…VSLMEGICAG (75 aa). 3 Fibronectin type-III domains span residues 2 to 74, 196 to 286, and 291 to 386; these read FYYH…GICA, PGWN…QART, and PSRA…YIVT.

In terms of tissue distribution, component of the acid-insoluble and acid-soluble organic matrix of the aragonitic skeleton (at protein level).

Its subcellular location is the secreted. This Acropora millepora (Staghorn coral) protein is MAM and fibronectin type III domain-containing protein 1.